The following is a 20-amino-acid chain: Cytochrome P450 2A7 (20 aa).

The protein belongs to the cytochrome P450 family. Heme is required as a cofactor.

Its subcellular location is the endoplasmic reticulum membrane. It is found in the microsome membrane. The catalysed reaction is an organic molecule + reduced [NADPH--hemoprotein reductase] + O2 = an alcohol + oxidized [NADPH--hemoprotein reductase] + H2O + H(+). Its function is as follows. Exhibits a high coumarin 7-hydroxylase activity. The sequence is that of Cytochrome P450 2A7 (CYP2A7) from Papio sp. (Baboon).